The chain runs to 136 residues: Protein NrdI (136 aa).

Belongs to the NrdI family.

In terms of biological role, probably involved in ribonucleotide reductase function. The polypeptide is Protein NrdI (Klebsiella pneumoniae (strain 342)).